The primary structure comprises 1402 residues: DNA-directed RNA polymerase subunit beta' (1402 aa).

4 residues coordinate Zn(2+): C71, C73, C86, and C89. 3 residues coordinate Mg(2+): D462, D464, and D466. Zn(2+)-binding residues include C811, C885, C892, and C895.

It belongs to the RNA polymerase beta' chain family. As to quaternary structure, the RNAP catalytic core consists of 2 alpha, 1 beta, 1 beta' and 1 omega subunit. When a sigma factor is associated with the core the holoenzyme is formed, which can initiate transcription. Mg(2+) serves as cofactor. The cofactor is Zn(2+).

The catalysed reaction is RNA(n) + a ribonucleoside 5'-triphosphate = RNA(n+1) + diphosphate. DNA-dependent RNA polymerase catalyzes the transcription of DNA into RNA using the four ribonucleoside triphosphates as substrates. The polypeptide is DNA-directed RNA polymerase subunit beta' (Rhizobium johnstonii (strain DSM 114642 / LMG 32736 / 3841) (Rhizobium leguminosarum bv. viciae)).